We begin with the raw amino-acid sequence, 536 residues long: Nucleosome assembly protein 1-like 3 (536 aa).

Disordered stretches follow at residues 1-104 and 160-338; these read MAEA…DKLP and PTEE…KEDP. Residues 35–75 show a composition bias toward low complexity; it reads SNSSSSTTSCGSTGSSSSSSSSSSSSSSSSSGSSGSSSNGS. The segment covering 77-95 has biased composition (basic residues); that stretch reads LHQKKRVPGPSRRAQRRPS. The span at 160–184 shows a compositional bias: acidic residues; sequence PTEEECEWNSEEEFSGDEEMQDDTP. Composition is skewed to basic and acidic residues over residues 199 to 220 and 227 to 269; these read GKEN…PEAK and PKET…KTDS. A compositionally biased stretch (polar residues) spans 287–300; that stretch reads TQANAEYTDQPTED. The span at 306–324 shows a compositional bias: basic and acidic residues; that stretch reads PVREAQKRVPETRPEERVN.

The protein belongs to the nucleosome assembly protein (NAP) family.

It is found in the nucleus. The sequence is that of Nucleosome assembly protein 1-like 3 (Nap1l3) from Rattus norvegicus (Rat).